A 605-amino-acid polypeptide reads, in one-letter code: Formin-binding protein 1-like (605 aa).

Positions 1 to 263 constitute an F-BAR domain; sequence MSWGTELWDQ…AAKSVDERRD (263 aa). The stretch at 66–258 forms a coiled coil; sequence FTSCVAFFNI…EGMILAAKSV (193 aa). Positions 245 to 535 are interaction with CDC42; sequence SKCLEGMILA…EFDDEFEDDD (291 aa). S295 carries the post-translational modification Phosphoserine. The stretch at 392–484 forms a coiled coil; that stretch reads LEDFSHLPPE…VEGKTGGRGD (93 aa). Positions 397–474 constitute an REM-1 domain; that stretch reads HLPPEQRRKK…IHKNEAWLSE (78 aa). Over residues 476 to 490 the composition is skewed to basic and acidic residues; it reads EGKTGGRGDRRHSSD. The tract at residues 476–539 is disordered; that stretch reads EGKTGGRGDR…EFEDDDPLPA (64 aa). 3 positions are modified to phosphoserine: S488, S501, and S505. Residues 522–605 are interaction with DNM1; that stretch reads GHHNEFDDEF…VTLEKNSKGS (84 aa). Acidic residues predominate over residues 527-536; the sequence is FDDEFEDDDP. Residues 538–599 form the SH3 domain; that stretch reads PAIGHCKAIY…PTSYIDVTLE (62 aa). Residues 541–597 form an interaction with DNM2 and WASL region; that stretch reads GHCKAIYPFDGHNEGTLAMKEGEVLYIIEEDKGDGWTRARRQNGEEGYVPTSYIDVT. The tract at residues 541–605 is interaction with DAAM1, DIAPH1 and DIAPH2; the sequence is GHCKAIYPFD…VTLEKNSKGS (65 aa).

It belongs to the FNBP1 family. As to quaternary structure, homodimerizes, the dimers can polymerize end-to-end to form filamentous structures. Interacts with GTP-bound CDC42. Interacts with DAAM1, DIAPH1, DIAPH2, DNM1, DNM2 and WASL/N-WASP. Interacts with ATG3. Interacts (via SH3 domain) with ABI1, WASF2, CDC42 and WIPF1.

The protein resides in the cytoplasm. The protein localises to the cytoskeleton. It is found in the cell cortex. It localises to the cytoplasmic vesicle. Its subcellular location is the cell membrane. Its function is as follows. Required to coordinate membrane tubulation with reorganization of the actin cytoskeleton during endocytosis. May bind to lipids such as phosphatidylinositol 4,5-bisphosphate and phosphatidylserine and promote membrane invagination and the formation of tubules. Also promotes CDC42-induced actin polymerization by activating the WASL/N-WASP-WASPIP/WIP complex, the predominant form of WASL/N-WASP in cells. Actin polymerization may promote the fission of membrane tubules to form endocytic vesicles. Essential for autophagy of intracellular bacterial pathogens. The protein is Formin-binding protein 1-like (FNBP1L) of Homo sapiens (Human).